The primary structure comprises 254 residues: tRNA (guanine-N(1)-)-methyltransferase (254 aa).

Residues Gly115 and 135–140 (VGDFVL) contribute to the S-adenosyl-L-methionine site.

It belongs to the RNA methyltransferase TrmD family. In terms of assembly, homodimer.

The protein resides in the cytoplasm. It catalyses the reaction guanosine(37) in tRNA + S-adenosyl-L-methionine = N(1)-methylguanosine(37) in tRNA + S-adenosyl-L-homocysteine + H(+). Its function is as follows. Specifically methylates guanosine-37 in various tRNAs. The protein is tRNA (guanine-N(1)-)-methyltransferase of Francisella tularensis subsp. tularensis (strain FSC 198).